The chain runs to 176 residues: MIAVYPGSFDPITLGHLDIIERGCNLFGSVIVAVARNPNKAPLFSVQQRIQQIQTCTQHLANLELDTFDTLTVTYTQKRQAQVLLRGLRALSDFEYELQMAHTNHSLSPHIETVFLATSNEYSFLSSSLVKEIAKFGGSVAHLVPENVAIELEECFTKTPPSVSIPPPTAPSTPTD.

S8 contacts substrate. Residues 8-9 (SF) and H16 contribute to the ATP site. The substrate site is built by K40, T72, and R86. ATP-binding positions include 87–89 (GLR), E97, and 122–128 (YSFLSSS).

The protein belongs to the bacterial CoaD family. Homohexamer. Requires Mg(2+) as cofactor.

Its subcellular location is the cytoplasm. The enzyme catalyses (R)-4'-phosphopantetheine + ATP + H(+) = 3'-dephospho-CoA + diphosphate. Its pathway is cofactor biosynthesis; coenzyme A biosynthesis; CoA from (R)-pantothenate: step 4/5. Its function is as follows. Reversibly transfers an adenylyl group from ATP to 4'-phosphopantetheine, yielding dephospho-CoA (dPCoA) and pyrophosphate. The polypeptide is Phosphopantetheine adenylyltransferase (Acaryochloris marina (strain MBIC 11017)).